The primary structure comprises 198 residues: Pyridoxine/pyridoxamine 5'-phosphate oxidase (198 aa).

Residues 47-52 (RMVLVK), 62-63 (FT), Arg68, Lys69, and Gln91 each bind FMN. Lys52 contacts substrate. Substrate-binding residues include Tyr109, Arg113, and Ser117. Residues 126 to 127 (QS) and Trp171 contribute to the FMN site. 177–179 (RLH) serves as a coordination point for substrate. Residue Arg181 participates in FMN binding.

Belongs to the pyridoxamine 5'-phosphate oxidase family. Homodimer. Requires FMN as cofactor.

The enzyme catalyses pyridoxamine 5'-phosphate + O2 + H2O = pyridoxal 5'-phosphate + H2O2 + NH4(+). It carries out the reaction pyridoxine 5'-phosphate + O2 = pyridoxal 5'-phosphate + H2O2. The protein operates within cofactor metabolism; pyridoxal 5'-phosphate salvage; pyridoxal 5'-phosphate from pyridoxamine 5'-phosphate: step 1/1. It participates in cofactor metabolism; pyridoxal 5'-phosphate salvage; pyridoxal 5'-phosphate from pyridoxine 5'-phosphate: step 1/1. Catalyzes the oxidation of either pyridoxine 5'-phosphate (PNP) or pyridoxamine 5'-phosphate (PMP) into pyridoxal 5'-phosphate (PLP). The chain is Pyridoxine/pyridoxamine 5'-phosphate oxidase from Anaeromyxobacter dehalogenans (strain 2CP-C).